Reading from the N-terminus, the 784-residue chain is MNKKSLPLMALRDMVLFPGVIAPIFVGRKKSLQALSRTTISEENNTKYILVTLQKKFDQENPSKHELYNTAILAKIIQIVKLPNNTAKILIEAVARVKLSDIKDEESFEANYEIIPDEEILDMHNMRSLVDNAVQLFNKYAMNDKKVNTEIIETINKEISNKTNFINIINILASHLITSLETKQQLLEETSPVKRITTVITTLTSNIVNSETEHALQQRVRKQIEKTQRDYYLHEQMKAIQKELDEDKSELADIEKKIKSLKLSKEAKEKAESEFKKLRAMNQMSAESGVTRNYLETLLSLPWGKYDNSKIDINQAEKILNRDHFGLEKVKERIIEYLAVLQRSNKIRGPILCLIGPPGVGKTSLVKSIAEGMGRKYAKFSLGGVRDEAEIRGHRKTYLGSMPGKILGQLKKVKTSNPVMLLDEIDKMSSDFRGDPASALLEVLDPEQNSHFVDHYLEVEYDLSNVVFIATANSHDLPRALSDRMEKIYISGYVEEEKLQIAKNYLVPKQFKVHKIKKDEITISEDAILDLIRYYTKESGVRALEREICALTRKALKQILADNTVKNISIDSNNLEEFLGAKKYNFGLVEKEDQIGSTTGLAYTEVGGELLTIEALAFSGKGEIKTTGKLGDVMKESAMAAYSCFRSRAPNFGLKYDNYKDFDIHIHVPAGAIPKDGPSAGCALFTTIVSLMTKIPVHRTVAMTGEITLRGNVLPIGGLKEKLLAASRGGIKTVLIPEENVKDLKDIPPNIKENLEIISVSNIDQVLKHALVEMPINKGLSYDL.

The Lon N-terminal domain occupies 6–207 (LPLMALRDMV…TVITTLTSNI (202 aa)). Residue 356–363 (GPPGVGKT) participates in ATP binding. Positions 592–773 (EDQIGSTTGL…DQVLKHALVE (182 aa)) constitute a Lon proteolytic domain. Active-site residues include Ser-679 and Lys-722.

It belongs to the peptidase S16 family. In terms of assembly, homohexamer. Organized in a ring with a central cavity.

It is found in the cytoplasm. It carries out the reaction Hydrolysis of proteins in presence of ATP.. Functionally, ATP-dependent serine protease that mediates the selective degradation of mutant and abnormal proteins as well as certain short-lived regulatory proteins. Required for cellular homeostasis and for survival from DNA damage and developmental changes induced by stress. Degrades polypeptides processively to yield small peptide fragments that are 5 to 10 amino acids long. Binds to DNA in a double-stranded, site-specific manner. In Rickettsia typhi (strain ATCC VR-144 / Wilmington), this protein is Lon protease.